A 628-amino-acid polypeptide reads, in one-letter code: MPRSALSVISFCHRLGKQERKRSFMGNSSNSWSHTPFPKLELGLGSRPTAPREPPACSICLERPREPISLDCGHDFCPRCFSTHRVPGCGPPCCPECRKTCKRRKGLRGLGERMRLLPQRPLPAAALQETCAVRAEPLLLVRINASGGLILRMGAINRCLKHPLARDTPVCLLAVLGGPHSGKTFLLNHLLQGLPGLASGEGSWPRSAGSGQGFRWGANGLSRGIWMWSHPFLLGKEGRKVAVFLVDTGDVMSPELSRETRTRLCALTSMLSSYQILTASQELKDTDLEHLETFVHVAEVMGRHYGMVPIQHLDLLVRDSSHPSKAWQGHVGDVIQKSSGKYPKVQGLLQGRRARCYLLPAPGRRWASRGHGSSGDDDAGRLRAYVADVLSAAPQHAKSRCPGYWSEGRPAARGDRRLLTGQQLAQEVKNLSGWMGRTGPSCASPDEMAAQLHDLRTVEAAKKEFEEYVRQQDAATKRIFSALRVLPDTMRNLLSAQKDTLLARHGATLLCTGREQTLEALEAELQAEAKAFMDSYTVRFCGHLAAVGGAVGAGLMGLAGGVVGAGMAAAALAAEAGMVAAGAAVGATGAAVVGGGVGAGLAATVGCMEKEEDERVQEGDREPLLQEE.

The segment at 57-98 (CSICLERPREPISLDCGHDFCPRCFSTHRVPGCGPPCCPECR) adopts an RING-type zinc-finger fold. The interval 132-628 (AVRAEPLLLV…GDREPLLQEE (497 aa)) is interaction with ZBTB16. A GB1/RHD3-type G domain is found at 167-409 (DTPVCLLAVL…RCPGYWSEGR (243 aa)). 318–319 (RD) serves as a coordination point for GTP. Helical transmembrane passes span 544-564 (LAAV…GVVG) and 577-597 (GMVA…GGGV).

It belongs to the TRAFAC class dynamin-like GTPase superfamily. GB1/RHD3 GTPase family. GB1 subfamily. In terms of assembly, self-associates. Interacts with SP1 in an oxidative stress-regulated manner. Interacts with SIGMAR1 in an oxidative stress-regulated manner. Interacts with ZBTB16 (via C2H2-type zinc finger domains 1 and 2). Auto-ubiquitinated.

Its subcellular location is the membrane. It localises to the cytoplasm. The protein resides in the nucleus. It is found in the nuclear body. The protein localises to the nucleoplasm. Its subcellular location is the endosome. It localises to the cytoplasmic vesicle. The protein resides in the secretory vesicle. It is found in the synaptic vesicle. The protein localises to the postsynaptic density. Its subcellular location is the perikaryon. It localises to the cell projection. The protein resides in the neuron projection. The enzyme catalyses S-ubiquitinyl-[E2 ubiquitin-conjugating enzyme]-L-cysteine + [acceptor protein]-L-lysine = [E2 ubiquitin-conjugating enzyme]-L-cysteine + N(6)-ubiquitinyl-[acceptor protein]-L-lysine.. The protein operates within protein modification; protein ubiquitination. E3 ubiquitin-protein ligase that plays an important role in neuronal differentiation, including neurogenesis and gliogenesis, during brain development. During embryonic development initiates neuronal differentiation by inducing cell cycle arrest at the G0/G1 phase through up-regulation of cell-cycle regulatory proteins. Plays a role not only in the fetal period during the development of the nervous system, but also in the adult brain, where it is involved in the maintenance of neural functions and protection of the nervous tissue cells from oxidative stress-induced damage. Exhibits GTPase and E3 ubiquitin-protein ligase activities. Regulates dendritic spine density and synaptic neurotransmission; its ability to hydrolyze GTP is involved in the maintenance of dendritic spine density. This Bos taurus (Bovine) protein is RING finger protein 112 (RNF112).